A 270-amino-acid chain; its full sequence is uncharacterized protein (270 aa).

The active-site Proton donor is the His-171. The Nucleophile role is filled by Cys-261.

It belongs to the DDAH family.

This is an uncharacterized protein from Aeropyrum pernix (strain ATCC 700893 / DSM 11879 / JCM 9820 / NBRC 100138 / K1).